A 313-amino-acid polypeptide reads, in one-letter code: Protein FixB (313 aa).

Residue 255-283 participates in FAD binding; the sequence is LYLAVGISGQIQHMVGANASQTIFAINKD.

The protein belongs to the ETF alpha-subunit/FixB family. In terms of assembly, heterodimer of FixA and FixB.

It functions in the pathway amine and polyamine metabolism; carnitine metabolism. Functionally, required for anaerobic carnitine reduction. May bring reductant to CaiA. This is Protein FixB from Escherichia coli O127:H6 (strain E2348/69 / EPEC).